Consider the following 171-residue polypeptide: UPF0398 protein M28_Spy1394 (171 aa).

This sequence belongs to the UPF0398 family.

The sequence is that of UPF0398 protein M28_Spy1394 from Streptococcus pyogenes serotype M28 (strain MGAS6180).